A 412-amino-acid chain; its full sequence is Acyl-[acyl-carrier-protein] hydrolase FATB2, chloroplastic (412 aa).

2 stretches are compositionally biased toward low complexity: residues 1 to 13 (TAAS…VPSA) and 56 to 66 (GSSVGLKSGGL). The N-terminal 46 residues, 1–46 (TAASSAFFPVPSADTSSRPGKLGNGPSSFSPLKPKSIPNGGLQVKA), are a transit peptide targeting the chloroplast. The segment at 1–78 (TAASSAFFPV…HDDAPSAPPP (78 aa)) is disordered. Catalysis depends on residues Asn-311, His-313, and Cys-348.

The protein belongs to the acyl-ACP thioesterase family.

The protein localises to the plastid. It localises to the chloroplast. The enzyme catalyses tetradecanoyl-[ACP] + H2O = tetradecanoate + holo-[ACP] + H(+). The catalysed reaction is hexadecanoyl-[ACP] + H2O = hexadecanoate + holo-[ACP] + H(+). In terms of biological role, plays an essential role in chain termination during de novo fatty acid synthesis. Possesses thioesterase activity for medium chain acyl-ACPs. Substrate preference is 14:0 &gt; 16:0 &gt; 16:1. The protein is Acyl-[acyl-carrier-protein] hydrolase FATB2, chloroplastic of Cuphea viscosissima (Blue waxweed).